The following is a 219-amino-acid chain: Dephospho-CoA kinase (219 aa).

Positions 8 to 215 constitute a DPCK domain; sequence LVGVTGGIGS…EAAASGPDCQ (208 aa). 16–21 lines the ATP pocket; sequence GSGKST.

This sequence belongs to the CoaE family.

It localises to the cytoplasm. The enzyme catalyses 3'-dephospho-CoA + ATP = ADP + CoA + H(+). It participates in cofactor biosynthesis; coenzyme A biosynthesis; CoA from (R)-pantothenate: step 5/5. In terms of biological role, catalyzes the phosphorylation of the 3'-hydroxyl group of dephosphocoenzyme A to form coenzyme A. The chain is Dephospho-CoA kinase from Chlorobium luteolum (strain DSM 273 / BCRC 81028 / 2530) (Pelodictyon luteolum).